Reading from the N-terminus, the 223-residue chain is UPF0758 protein FMG_0357 (223 aa).

Residues 101-223 (SLNDPDSVAE…SLSMRKGMYF (123 aa)) enclose the MPN domain. 3 residues coordinate Zn(2+): histidine 172, histidine 174, and aspartate 185. Residues 172–185 (HNHPSGSLIPSNAD) carry the JAMM motif motif.

The protein belongs to the UPF0758 family.

The protein is UPF0758 protein FMG_0357 of Finegoldia magna (strain ATCC 29328 / DSM 20472 / WAL 2508) (Peptostreptococcus magnus).